The following is a 438-amino-acid chain: UDP-N-acetylglucosamine 1-carboxyvinyltransferase (438 aa).

35–36 (KN) contributes to the phosphoenolpyruvate binding site. R105 serves as a coordination point for UDP-N-acetyl-alpha-D-glucosamine. Residue C129 is the Proton donor of the active site. Position 129 is a 2-(S-cysteinyl)pyruvic acid O-phosphothioketal (C129). UDP-N-acetyl-alpha-D-glucosamine-binding positions include 134–138 (RPVDL), D321, and V343.

The protein belongs to the EPSP synthase family. MurA subfamily.

It is found in the cytoplasm. The enzyme catalyses phosphoenolpyruvate + UDP-N-acetyl-alpha-D-glucosamine = UDP-N-acetyl-3-O-(1-carboxyvinyl)-alpha-D-glucosamine + phosphate. It participates in cell wall biogenesis; peptidoglycan biosynthesis. Its function is as follows. Cell wall formation. Adds enolpyruvyl to UDP-N-acetylglucosamine. This is UDP-N-acetylglucosamine 1-carboxyvinyltransferase from Synechocystis sp. (strain ATCC 27184 / PCC 6803 / Kazusa).